Reading from the N-terminus, the 131-residue chain is MNPAYRKAMLESEIQKLLMEALQQLRDPRLKKDFVTFSRVELSKDKRYADVYVSFLGTPEERKETVEILNRAKGFFRTFIAKNLRLYVAPEIRFYEDKGIEASVKVHQLLVQLGYDPLKDKEKKEEDKEEE.

It belongs to the RbfA family. As to quaternary structure, monomer. Binds 30S ribosomal subunits, but not 50S ribosomal subunits or 70S ribosomes.

The protein localises to the cytoplasm. In terms of biological role, one of several proteins that assist in the late maturation steps of the functional core of the 30S ribosomal subunit. Associates with free 30S ribosomal subunits (but not with 30S subunits that are part of 70S ribosomes or polysomes). Required for efficient processing of 16S rRNA. May interact with the 5'-terminal helix region of 16S rRNA. The protein is Ribosome-binding factor A of Thermotoga maritima (strain ATCC 43589 / DSM 3109 / JCM 10099 / NBRC 100826 / MSB8).